The following is a 345-amino-acid chain: DNA N(6)-methyladenine demethylase ALKBH1A (345 aa).

Substrate contacts are provided by residues tryptophan 179 and 186 to 188 (FDW). Residues 225–345 (RPEGAIVNYF…RININIRQVF (121 aa)) form the Fe2OG dioxygenase domain. Position 232–234 (232–234 (NYF)) interacts with 2-oxoglutarate. Fe cation contacts are provided by histidine 243, aspartate 245, and histidine 299. Residue 336 to 342 (RININIR) participates in 2-oxoglutarate binding.

The protein belongs to the alkB family. Fe(2+) serves as cofactor. In terms of tissue distribution, mostly expressed in siliques, to a lower extent in roots, seedlings and rosette leaves, but barely in cauline leaves, stems and flowers.

The protein resides in the nucleus. The protein localises to the cytoplasm. The enzyme catalyses an N(6)-methyl-2'-deoxyadenosine in DNA + 2-oxoglutarate + O2 = a 2'-deoxyadenosine in DNA + formaldehyde + succinate + CO2. In terms of biological role, dioxygenase that catalyzes DNA N(6)-methyladenine (6 mA) demethylation to modulate gene expression and regulate seed germination. This Arabidopsis thaliana (Mouse-ear cress) protein is DNA N(6)-methyladenine demethylase ALKBH1A.